Here is a 299-residue protein sequence, read N- to C-terminus: 4-diphosphocytidyl-2-C-methyl-D-erythritol kinase (299 aa).

Lys20 is an active-site residue. Position 106–116 (106–116 (PMGGGLGGGSS)) interacts with ATP. Asp148 is a catalytic residue.

This sequence belongs to the GHMP kinase family. IspE subfamily. Homodimer.

The catalysed reaction is 4-CDP-2-C-methyl-D-erythritol + ATP = 4-CDP-2-C-methyl-D-erythritol 2-phosphate + ADP + H(+). It functions in the pathway isoprenoid biosynthesis; isopentenyl diphosphate biosynthesis via DXP pathway; isopentenyl diphosphate from 1-deoxy-D-xylulose 5-phosphate: step 3/6. In terms of biological role, catalyzes the phosphorylation of the position 2 hydroxy group of 4-diphosphocytidyl-2C-methyl-D-erythritol. In Yersinia pseudotuberculosis serotype O:1b (strain IP 31758), this protein is 4-diphosphocytidyl-2-C-methyl-D-erythritol kinase.